A 160-amino-acid chain; its full sequence is Phosphopantetheine adenylyltransferase (160 aa).

S10 provides a ligand contact to substrate. ATP-binding positions include 10-11 (SF) and H18. Positions 42, 74, and 88 each coordinate substrate. Residues 89–91 (GLR), E99, and 124–130 (YSFLSSS) each bind ATP.

This sequence belongs to the bacterial CoaD family. As to quaternary structure, homohexamer. Requires Mg(2+) as cofactor.

The protein resides in the cytoplasm. It carries out the reaction (R)-4'-phosphopantetheine + ATP + H(+) = 3'-dephospho-CoA + diphosphate. It participates in cofactor biosynthesis; coenzyme A biosynthesis; CoA from (R)-pantothenate: step 4/5. In terms of biological role, reversibly transfers an adenylyl group from ATP to 4'-phosphopantetheine, yielding dephospho-CoA (dPCoA) and pyrophosphate. This chain is Phosphopantetheine adenylyltransferase, found in Bacillus velezensis (strain DSM 23117 / BGSC 10A6 / LMG 26770 / FZB42) (Bacillus amyloliquefaciens subsp. plantarum).